A 408-amino-acid polypeptide reads, in one-letter code: uncharacterized protein (408 aa).

A run of 12 helical transmembrane segments spans residues 9–29, 49–69, 77–97, 100–120, 135–155, 167–187, 216–236, 252–272, 283–303, 308–328, 340–360, and 373–393; these read WFVLLFTFVFAIGMNSFRNSF, VSVSIFMITTGIVQFFVGFFI, IMALGAVCISASFLVLPYSPN, VFSAIYGVLGGIGYSCAVGVT, LALAILTNANSAGLLLLSPIW, TYTILGIVMAAVLLPLLVFGM, LIHILYFGVFTCGFTMGIIDA, GMMAAFGAFIIIGGLLAGWLS, SILFFIRLLSLICLLIPILGI, LWYFGFILLFGLSYTGVIPLT, LIGSLLGINFFIHQVAGALSV, and YLLIVAVCIVFVGLSAVIELV.

Belongs to the major facilitator superfamily.

The protein resides in the cell membrane. This is an uncharacterized protein from Bacillus subtilis (strain 168).